Reading from the N-terminus, the 296-residue chain is 4-hydroxybenzoate octaprenyltransferase (296 aa).

8 helical membrane-spanning segments follow: residues 23–43 (IGIL…SPGW), 46–66 (GLVL…GCVM), 99–119 (LALA…PLVV), 141–161 (IPQA…FAAI), 163–183 (GQLP…AIAY), 211–231 (DVFA…WVGV), 237–257 (WPYF…YALI), and 265–285 (CFKA…GVLA).

The protein belongs to the UbiA prenyltransferase family. The cofactor is Mg(2+).

The protein resides in the cell inner membrane. The enzyme catalyses all-trans-octaprenyl diphosphate + 4-hydroxybenzoate = 4-hydroxy-3-(all-trans-octaprenyl)benzoate + diphosphate. Its pathway is cofactor biosynthesis; ubiquinone biosynthesis. Catalyzes the prenylation of para-hydroxybenzoate (PHB) with an all-trans polyprenyl group. Mediates the second step in the final reaction sequence of ubiquinone-8 (UQ-8) biosynthesis, which is the condensation of the polyisoprenoid side chain with PHB, generating the first membrane-bound Q intermediate 3-octaprenyl-4-hydroxybenzoate. The chain is 4-hydroxybenzoate octaprenyltransferase from Methylobacillus flagellatus (strain ATCC 51484 / DSM 6875 / VKM B-1610 / KT).